Here is a 561-residue protein sequence, read N- to C-terminus: Putative transport protein YbjL (561 aa).

The next 5 helical transmembrane spans lie at 8–28 (LLNGNYILLLFVVLALGLCLG), 32–52 (LGSIQLGNSIGVLVVSLLLGQ), 66–86 (FMLFIFCVGVEAGPNFFSIFF), 94–114 (MLALVMVGSALLIALGLGKLF), and 158–178 (NLSLGYALTYLIGLVSLIVGA). RCK C-terminal domains follow at residues 202 to 288 (LDTD…SFRN) and 292 to 373 (VFDR…RIGF). The next 5 helical transmembrane spans lie at 383 to 403 (LLAFCAFFIIGLMIGMITFQF), 406 to 426 (FSFGMGNAAGLLFAGIMLGFM), 451 to 471 (VFMAGVGLSAGSGINNGLGAI), 475 to 495 (MLVAGLIVSLVPVVICFLFGA), and 540 to 560 (AIANVLLTLAGTIIVMVWPGL).

The protein belongs to the AAE transporter (TC 2.A.81) family. YbjL subfamily.

It is found in the cell membrane. The sequence is that of Putative transport protein YbjL from Escherichia fergusonii (strain ATCC 35469 / DSM 13698 / CCUG 18766 / IAM 14443 / JCM 21226 / LMG 7866 / NBRC 102419 / NCTC 12128 / CDC 0568-73).